The primary structure comprises 535 residues: Bifunctional purine biosynthesis protein PurH (535 aa).

One can recognise an MGS-like domain in the interval 1 to 148 (MNNARPIRRA…KNHKDTTIIV (148 aa)).

It belongs to the PurH family.

It catalyses the reaction (6R)-10-formyltetrahydrofolate + 5-amino-1-(5-phospho-beta-D-ribosyl)imidazole-4-carboxamide = 5-formamido-1-(5-phospho-D-ribosyl)imidazole-4-carboxamide + (6S)-5,6,7,8-tetrahydrofolate. It carries out the reaction IMP + H2O = 5-formamido-1-(5-phospho-D-ribosyl)imidazole-4-carboxamide. It functions in the pathway purine metabolism; IMP biosynthesis via de novo pathway; 5-formamido-1-(5-phospho-D-ribosyl)imidazole-4-carboxamide from 5-amino-1-(5-phospho-D-ribosyl)imidazole-4-carboxamide (10-formyl THF route): step 1/1. It participates in purine metabolism; IMP biosynthesis via de novo pathway; IMP from 5-formamido-1-(5-phospho-D-ribosyl)imidazole-4-carboxamide: step 1/1. This is Bifunctional purine biosynthesis protein PurH from Shewanella woodyi (strain ATCC 51908 / MS32).